We begin with the raw amino-acid sequence, 471 residues long: MSKKYDAGVKEYRDTYWTPDYVPLDTDLLACFKCTGQEGVPKEEVAAAVAAESSTGTWSTVWSELLTDLDFYKGRCYRIEDVPGDKESFYAFIAYPLDLFEEGSITNVLTSLVGNVFGFKALRHLRLEDIRFPMAFIKSCYGPPNGIQVERDRMNKYGRPLLGCTIKPKLGLSGKNYGRVVYECLRGGLDFTKDDENINSQPFQRWQNRFEFVAEAIKLSEQETGERKGHYLNVTANTPEEMYERAEFAKELGMPIIMHDFITGGFTANTGLSKWCRKNGMLLHIHRAMHAVIDRHPKHGIHFRVLAKCLRLSGGDQLHTGTVVGKLEGDRQTTLGYIDQLRESFVPEDRSRGNFFDQDWGSMPGVFAVASGGIHVWHMPALVAIFGDDSVLQFGGGTHGHPWGSAAGAAANRVALEACVKARNAGREIEKESRDILMEAGKHSPELAIALETWKEIKFEFDTVDKLDVQN.

The substrate site is built by Asn115 and Thr165. Catalysis depends on Lys167, which acts as the Proton acceptor. Lys169 contacts substrate. Residues Lys193, Asp195, and Glu196 each contribute to the Mg(2+) site. Residue Lys193 is modified to N6-carboxylysine. His286 functions as the Proton acceptor in the catalytic mechanism. Substrate is bound by residues Arg287, His319, and Ser371.

Belongs to the RuBisCO large chain family. Type I subfamily. In terms of assembly, heterohexadecamer of 8 large chains and 8 small chains. Forms a CsoS2-CsoS1-RuBisCO complex. Requires Mg(2+) as cofactor.

The protein resides in the carboxysome. The enzyme catalyses 2 (2R)-3-phosphoglycerate + 2 H(+) = D-ribulose 1,5-bisphosphate + CO2 + H2O. It catalyses the reaction D-ribulose 1,5-bisphosphate + O2 = 2-phosphoglycolate + (2R)-3-phosphoglycerate + 2 H(+). In terms of biological role, ruBisCO catalyzes two reactions: the carboxylation of D-ribulose 1,5-bisphosphate, the primary event in carbon dioxide fixation, as well as the oxidative fragmentation of the pentose substrate in the photorespiration process. Both reactions occur simultaneously and in competition at the same active site. This chain is Ribulose bisphosphate carboxylase large chain, found in Parasynechococcus marenigrum (strain WH8102).